Reading from the N-terminus, the 462-residue chain is DNA polymerase delta subunit 3 (462 aa).

Residue Ala-2 is modified to N-acetylalanine. Disordered regions lie at residues 144 to 186, 200 to 230, 254 to 384, and 403 to 462; these read APAE…ASQQ, TKTQDTNKETKPEAREVTSASSAGGKAPGKG, AVKE…RVLK, and SESC…FQKK. The span at 156-174 shows a compositional bias: polar residues; the sequence is QSNLQAASEAQASELTTNG. Positions 204–215 are enriched in basic and acidic residues; the sequence is DTNKETKPEARE. The segment covering 218–230 has biased composition (low complexity); that stretch reads SASSAGGKAPGKG. Lys-256 participates in a covalent cross-link: Glycyl lysine isopeptide (Lys-Gly) (interchain with G-Cter in SUMO); alternate. Residue Lys-256 forms a Glycyl lysine isopeptide (Lys-Gly) (interchain with G-Cter in SUMO2); alternate linkage. Lys-259 is covalently cross-linked (Glycyl lysine isopeptide (Lys-Gly) (interchain with G-Cter in SUMO2)). The segment covering 284–305 has biased composition (basic and acidic residues); the sequence is RKSEPGKVQQKEKSSRGKRVDL. Ser-306 carries the phosphoserine modification. Residues 330–344 show a composition bias toward acidic residues; it reads SSEDEVFEDSPEMYE. A compositionally biased stretch (pro residues) spans 348–368; that stretch reads PSPPPVSPPPDPMPKTEPPPV. Phosphoserine is present on residues Ser-403 and Ser-405. Thr-407 is subject to Phosphothreonine. A Phosphoserine modification is found at Ser-409. Low complexity predominate over residues 416 to 427; that stretch reads KPASAHKPPAAA. Positions 428 to 437 are enriched in basic and acidic residues; that stretch reads VKREPREERK. A Glycyl lysine isopeptide (Lys-Gly) (interchain with G-Cter in SUMO); alternate cross-link involves residue Lys-429. Lys-429 is covalently cross-linked (Glycyl lysine isopeptide (Lys-Gly) (interchain with G-Cter in SUMO2); alternate). Residues 451-462 show a composition bias toward polar residues; the sequence is RQVSITGFFQKK. The PIP-box signature appears at 452-459; it reads QVSITGFF. A Phosphoserine modification is found at Ser-454.

In terms of assembly, component of both the DNA polymerase delta and DNA polymerase zeta complexes. The tetrameric DNA polymerase delta complex (Pol-delta4), which consists of POLD1/p125, POLD2/p50, POLD3/p66/p68 and POLD4/p12, with POLD1 bearing DNA polymerase and 3' to 5' proofreading exonuclease activities. Within this complex, directly interacts with POLD2. Following stress caused by DNA damaging agents or by replication stress, POLD4 is degraded and Pol-delta4 is converted into a trimeric form of the complex (Pol-delta3), which consists of POLD1, POLD2 and POLD3. Pol-delta3 is the major form occurring at S phase replication sites, as well as DNA damage sites. Directly interacts with PCNA, as do POLD1 and POLD4; this interaction stimulates Pol-delta polymerase activity. POLD3 phosphorylation at Ser-454 impairs PCNA binding. Component of the DNA polymerase zeta complex (POLZ), which consists of REV3L, MAD2L2, POLD2 and POLD3, with REV3L bearing DNA polymerase catalytic activity. The DNA polymerase delta complex interacts with POLDIP2; this interaction is probably mediated through direct binding to POLD2. In terms of processing, ubiquitinated, but not targeted to the proteasome. Sumoylated. Sumoylation by SUMO3 may be predominant. Post-translationally, phosphorylation at Ser-454 is thought to decrease the affinity for PCNA and Pol-delta4 processivity. May be phosphorylated by CDK1-cyclin-A complex, as well as CDK2-cyclin-A and CDK2-cyclin-E complexes. PCNA interferes with CDK-cyclin phosphorylation.

The protein resides in the cytoplasm. It localises to the nucleus. Its function is as follows. Accessory component of both the DNA polymerase delta complex and the DNA polymerase zeta complex. As a component of the trimeric and tetrameric DNA polymerase delta complexes (Pol-delta3 and Pol-delta4, respectively), plays a role in high fidelity genome replication, including in lagging strand synthesis, and repair. Required for optimal Pol-delta activity. Stabilizes the Pol-delta complex and plays a major role in Pol-delta stimulation by PCNA. Pol-delta3 and Pol-delta4 are characterized by the absence or the presence of POLD4. They exhibit differences in catalytic activity. Most notably, Pol-delta3 shows higher proofreading activity than Pol-delta4. Although both Pol-delta3 and Pol-delta4 process Okazaki fragments in vitro, Pol-delta3 may also be better suited to fulfill this task, exhibiting near-absence of strand displacement activity compared to Pol-delta4 and stalling on encounter with the 5'-blocking oligonucleotides. Pol-delta3 idling process may avoid the formation of a gap, while maintaining a nick that can be readily ligated. Along with DNA polymerase kappa, DNA polymerase delta carries out approximately half of nucleotide excision repair (NER) synthesis following UV irradiation. In this context, POLD3, along with PCNA and RFC1-replication factor C complex, is required to recruit POLD1, the catalytic subunit of the polymerase delta complex, to DNA damage sites. Under conditions of DNA replication stress, required for the repair of broken replication forks through break-induced replication (BIR). Involved in the translesion synthesis (TLS) of templates carrying O6-methylguanine or abasic sites performed by Pol-delta4, independently of DNA polymerase zeta (REV3L) or eta (POLH). Facilitates abasic site bypass by DNA polymerase delta by promoting extension from the nucleotide inserted opposite the lesion. Also involved in TLS, as a component of the tetrameric DNA polymerase zeta complex. Along with POLD2, dramatically increases the efficiency and processivity of DNA synthesis of the DNA polymerase zeta complex compared to the minimal zeta complex, consisting of only REV3L and REV7. The sequence is that of DNA polymerase delta subunit 3 (Pold3) from Mus musculus (Mouse).